The following is an 86-amino-acid chain: Toxin ICK-18 (86 aa).

The N-terminal stretch at 1–19 (MKTIFALVFCCAIAVVVLG) is a signal peptide. Intrachain disulfides connect Cys-35–Cys-49, Cys-42–Cys-61, Cys-48–Cys-76, and Cys-79–Cys-86.

The protein belongs to the neurotoxin 21 family. Expressed by the venom gland.

Its subcellular location is the secreted. Probable neurotoxin with ion channel impairing activity. This Trittame loki (Brush-footed trapdoor spider) protein is Toxin ICK-18.